The chain runs to 128 residues: Large ribosomal subunit protein mL51 (128 aa).

A mitochondrion-targeting transit peptide spans 1 to 31 (MAGSLSWVAGRRLWGLVPLACRSFFLGVPRL).

Belongs to the mitochondrion-specific ribosomal protein mL51 family. In terms of assembly, component of the mitochondrial ribosome large subunit (39S) which comprises a 16S rRNA and about 50 distinct proteins. Interacts with OXA1L.

Its subcellular location is the mitochondrion. The polypeptide is Large ribosomal subunit protein mL51 (MRPL51) (Bos taurus (Bovine)).